The sequence spans 476 residues: Cardiolipin synthase (476 aa).

The next 2 membrane-spanning stretches (helical) occupy residues 2–22 and 31–51; these read HLFI…IIFI and WAWI…YILF. 2 PLD phosphodiesterase domains span residues 207–234 and 389–416; these read INYR…GDEY and EKGF…DIRS. Catalysis depends on residues H212, K214, D219, H394, K396, and D401.

This sequence belongs to the phospholipase D family. Cardiolipin synthase subfamily.

It is found in the cell membrane. It catalyses the reaction 2 a 1,2-diacyl-sn-glycero-3-phospho-(1'-sn-glycerol) = a cardiolipin + glycerol. Its function is as follows. Catalyzes the reversible phosphatidyl group transfer from one phosphatidylglycerol molecule to another to form cardiolipin (CL) (diphosphatidylglycerol) and glycerol. In Clostridium perfringens (strain 13 / Type A), this protein is Cardiolipin synthase (cls).